The primary structure comprises 440 residues: Argininosuccinate lyase (440 aa).

The protein belongs to the lyase 1 family. Argininosuccinate lyase subfamily.

It is found in the cytoplasm. The catalysed reaction is 2-(N(omega)-L-arginino)succinate = fumarate + L-arginine. Its pathway is amino-acid biosynthesis; L-arginine biosynthesis; L-arginine from L-ornithine and carbamoyl phosphate: step 3/3. The chain is Argininosuccinate lyase from Clostridium botulinum (strain Langeland / NCTC 10281 / Type F).